A 240-amino-acid chain; its full sequence is Urease accessory protein UreD (240 aa).

It belongs to the UreD family. As to quaternary structure, ureD, UreF and UreG form a complex that acts as a GTP-hydrolysis-dependent molecular chaperone, activating the urease apoprotein by helping to assemble the nickel containing metallocenter of UreC. The UreE protein probably delivers the nickel.

It is found in the cytoplasm. Functionally, required for maturation of urease via the functional incorporation of the urease nickel metallocenter. This chain is Urease accessory protein UreD, found in Granulibacter bethesdensis (strain ATCC BAA-1260 / CGDNIH1).